The chain runs to 448 residues: Probable glycine dehydrogenase (decarboxylating) subunit 1 (448 aa).

Belongs to the GcvP family. N-terminal subunit subfamily. The glycine cleavage system is composed of four proteins: P, T, L and H. In this organism, the P 'protein' is a heterodimer of two subunits.

It carries out the reaction N(6)-[(R)-lipoyl]-L-lysyl-[glycine-cleavage complex H protein] + glycine + H(+) = N(6)-[(R)-S(8)-aminomethyldihydrolipoyl]-L-lysyl-[glycine-cleavage complex H protein] + CO2. Its function is as follows. The glycine cleavage system catalyzes the degradation of glycine. The P protein binds the alpha-amino group of glycine through its pyridoxal phosphate cofactor; CO(2) is released and the remaining methylamine moiety is then transferred to the lipoamide cofactor of the H protein. This Listeria welshimeri serovar 6b (strain ATCC 35897 / DSM 20650 / CCUG 15529 / CIP 8149 / NCTC 11857 / SLCC 5334 / V8) protein is Probable glycine dehydrogenase (decarboxylating) subunit 1.